Consider the following 391-residue polypeptide: Processive diacylglycerol beta-glucosyltransferase (391 aa).

The protein belongs to the glycosyltransferase 28 family. UgtP subfamily.

The protein resides in the cell membrane. It carries out the reaction a 1,2-diacyl-3-O-(beta-D-glucopyranosyl)-sn-glycerol + UDP-alpha-D-glucose = a 1,2-diacyl-3-O-(beta-D-Glc-(1-&gt;6)-beta-D-Glc)-sn-glycerol + UDP + H(+). The catalysed reaction is a 1,2-diacyl-sn-glycerol + UDP-alpha-D-glucose = a 1,2-diacyl-3-O-(beta-D-glucopyranosyl)-sn-glycerol + UDP + H(+). It functions in the pathway glycolipid metabolism; diglucosyl-diacylglycerol biosynthesis. Functionally, processive glucosyltransferase involved in the biosynthesis of both the bilayer- and non-bilayer-forming membrane glucolipids. Is able to successively transfer two glucosyl residues to diacylglycerol (DAG), thereby catalyzing the formation of beta-monoglucosyl-DAG (3-O-(beta-D-glucopyranosyl)-1,2-diacyl-sn-glycerol) and beta-diglucosyl-DAG (3-O-(beta-D-glucopyranosyl-beta-(1-&gt;6)-D-glucopyranosyl)-1,2-diacyl-sn-glycerol). Beta-diglucosyl-DAG is the predominant glycolipid found in Bacillales and is also used as a membrane anchor for lipoteichoic acid (LTA). The protein is Processive diacylglycerol beta-glucosyltransferase of Staphylococcus aureus (strain Mu3 / ATCC 700698).